Here is a 424-residue protein sequence, read N- to C-terminus: UDP-N-acetylglucosamine 1-carboxyvinyltransferase (424 aa).

22–23 (KN) contributes to the phosphoenolpyruvate binding site. Arg98 contributes to the UDP-N-acetyl-alpha-D-glucosamine binding site. Residue Cys122 is the Proton donor of the active site. Cys122 carries the post-translational modification 2-(S-cysteinyl)pyruvic acid O-phosphothioketal. UDP-N-acetyl-alpha-D-glucosamine contacts are provided by residues 127–131 (RPVDQ), Asp312, and Ile334.

Belongs to the EPSP synthase family. MurA subfamily.

Its subcellular location is the cytoplasm. It carries out the reaction phosphoenolpyruvate + UDP-N-acetyl-alpha-D-glucosamine = UDP-N-acetyl-3-O-(1-carboxyvinyl)-alpha-D-glucosamine + phosphate. The protein operates within cell wall biogenesis; peptidoglycan biosynthesis. Cell wall formation. Adds enolpyruvyl to UDP-N-acetylglucosamine. This Xanthomonas axonopodis pv. citri (strain 306) protein is UDP-N-acetylglucosamine 1-carboxyvinyltransferase.